Reading from the N-terminus, the 325-residue chain is Ribosomal RNA small subunit methyltransferase H (325 aa).

Residues 42–44 (GGH), Asp62, Phe86, Asp105, and Gln112 contribute to the S-adenosyl-L-methionine site.

It belongs to the methyltransferase superfamily. RsmH family.

The protein localises to the cytoplasm. It catalyses the reaction cytidine(1402) in 16S rRNA + S-adenosyl-L-methionine = N(4)-methylcytidine(1402) in 16S rRNA + S-adenosyl-L-homocysteine + H(+). Specifically methylates the N4 position of cytidine in position 1402 (C1402) of 16S rRNA. The chain is Ribosomal RNA small subunit methyltransferase H from Cupriavidus metallidurans (strain ATCC 43123 / DSM 2839 / NBRC 102507 / CH34) (Ralstonia metallidurans).